Reading from the N-terminus, the 740-residue chain is Catalase-peroxidase (740 aa).

The tryptophyl-tyrosyl-methioninium (Trp-Tyr) (with M-255) cross-link spans 107-229; it reads WHAAGTYRIH…LAAVQMGLIY (123 aa). Catalysis depends on histidine 108, which acts as the Proton acceptor. Residues 229-255 constitute a cross-link (tryptophyl-tyrosyl-methioninium (Tyr-Met) (with W-107)); the sequence is YVNPEGPNGNPDPMAAAVDIRETFRRM. Histidine 270 provides a ligand contact to heme b. Tryptophan 321 (tryptophan radical intermediate) is an active-site residue.

Belongs to the peroxidase family. Peroxidase/catalase subfamily. In terms of assembly, homodimer. Requires heme b as cofactor. Post-translationally, formation of the three residue Trp-Tyr-Met cross-link is important for the catalase, but not the peroxidase activity of the enzyme.

The enzyme catalyses H2O2 + AH2 = A + 2 H2O. The catalysed reaction is 2 H2O2 = O2 + 2 H2O. In terms of biological role, bifunctional enzyme with both catalase and broad-spectrum peroxidase activity, oxidizing various electron donors including NADP(H). Protects M.tuberculosis against toxic reactive oxygen species (ROS) including hydrogen peroxide as well as organic peroxides and thus contributes to its survival within host macrophages by countering the phagocyte oxidative burst. Also displays efficient peroxynitritase activity, which may help the bacterium to persist in macrophages. Functionally, catalyzes the oxidative activation of the antitubercular pro-drug isoniazid (INH) to generate an isonicotinoyl radical that then reacts nonenzymatically with NAD to form an isonicotinoyl-NAD adduct which inhibits InhA. This Mycobacterium tuberculosis (strain CDC 1551 / Oshkosh) protein is Catalase-peroxidase.